Here is a 352-residue protein sequence, read N- to C-terminus: Endophilin-A1 (352 aa).

The membrane-binding amphipathic helix stretch occupies residues 1 to 21; the sequence is MSVAGLKKQFHKATQKVSEKV. The tract at residues 1 to 27 is disordered; the sequence is MSVAGLKKQFHKATQKVSEKVGGAEGT. The tract at residues 1 to 125 is binds and tubulates liposomes; the sequence is MSVAGLKKQF…EVGEAMRELS (125 aa). Positions 18–249 constitute a BAR domain; the sequence is SEKVGGAEGT…LEERIRQASS (232 aa). A required for dimerization upon membrane association region spans residues 60-87; it reads PNPASRAKLSMINTMSKIRGQEKGPGYP. Residues 181–248 are a coiled coil; that stretch reads EELRQALEKF…RLEERIRQAS (68 aa). Positions 245 to 257 are enriched in basic and acidic residues; it reads RQASSQPRREYQP. The disordered stretch occupies residues 245–289; that stretch reads RQASSQPRREYQPKPRMSLEFPTGDSTQPNGGLSHTGTPKPSGVQ. Phosphoserine is present on Ser262. A compositionally biased stretch (polar residues) spans 268-283; the sequence is GDSTQPNGGLSHTGTP. Residues 290–349 enclose the SH3 domain; sequence MDQPCCRALYDFEPENEGELGFKEGDIITLTNQIDENWYEGMLHGHSGFFPINYVEILVA. At Tyr299 the chain carries Phosphotyrosine.

The protein belongs to the endophilin family. In terms of assembly, monomer; in cytoplasm. Homodimer; when associated with membranes. Interacts with OPHN1. Interacts with SYNJ1. Interacts with DNM1. Interacts with MAP4K3; the interaction appears to regulate MAP4K3-mediated JNK activation. Interacts with PDCD6IP. Interacts with ATXN2. Interacts with ADAM9 and ADAM15 cytoplasmic tails. Interacts with BIN2. Interacts with TMEM108. Interacts with ADGRB2. In terms of tissue distribution, brain, mostly in frontal cortex. Expressed at high level in fetal cerebellum.

Its subcellular location is the cytoplasm. It is found in the membrane. It localises to the early endosome. The protein resides in the presynapse. Its function is as follows. Implicated in synaptic vesicle endocytosis. May recruit other proteins to membranes with high curvature. Required for BDNF-dependent dendrite outgrowth. Cooperates with SH3GL2 to mediate BDNF-NTRK2 early endocytic trafficking and signaling from early endosomes. The polypeptide is Endophilin-A1 (SH3GL2) (Homo sapiens (Human)).